The chain runs to 296 residues: Cytidine deaminase (296 aa).

CMP/dCMP-type deaminase domains lie at 52-167 (SPVE…YLPD) and 191-296 (QGHD…YISL). 93 to 95 (NQE) lines the substrate pocket. His106 provides a ligand contact to Zn(2+). The active-site Proton donor is Glu108. Zn(2+)-binding residues include Cys133 and Cys136.

Belongs to the cytidine and deoxycytidylate deaminase family. In terms of assembly, homodimer. Zn(2+) is required as a cofactor.

It catalyses the reaction cytidine + H2O + H(+) = uridine + NH4(+). The enzyme catalyses 2'-deoxycytidine + H2O + H(+) = 2'-deoxyuridine + NH4(+). This enzyme scavenges exogenous and endogenous cytidine and 2'-deoxycytidine for UMP synthesis. The sequence is that of Cytidine deaminase from Mannheimia succiniciproducens (strain KCTC 0769BP / MBEL55E).